The following is a 336-amino-acid chain: Phytochrome A-associated F-box protein (336 aa).

Positions 3–55 constitute an F-box domain; sequence ESVFSCIPEDVVFNIFFKLQDDPRNWARLACVCTKFSSIVRNVCCKTQCYSAI. Positions 197 to 201 match the Nuclear localization signal motif; the sequence is RKRRK.

In terms of assembly, probable component of an E3 ubiquitin ligase SCF complex. Interacts with SKP1A/ASK1 and SKP1B/ASK2.

The protein localises to the nucleus. It participates in protein modification; protein ubiquitination. Component of SCF(ASK-cullin-F-box) E3 ubiquitin ligase complexes, which may mediate the ubiquitination and subsequent proteasomal degradation of target proteins. Negative regulator of the phyA signaling pathway that shifts the responsiveness of the phyA signaling system associated with hypocotyl elongation from red to far-red wavelength. The protein is Phytochrome A-associated F-box protein (EID1) of Arabidopsis thaliana (Mouse-ear cress).